Reading from the N-terminus, the 700-residue chain is Protein UL29/28 (700 aa).

The segment at 1–30 (MSGRRKGCSAATASSSSSSPPSRLPLPGHA) is disordered. The segment covering 9 to 21 (SAATASSSSSSPP) has biased composition (low complexity).

The protein belongs to the herpesviridae US22 family. Interacts with UL38 and host HDAC1; these interactions are necessary for the HDAC1 interaction with UL38. Interacts with host MTA2.

It is found in the virion. Its subcellular location is the host nucleus. The protein localises to the host cytoplasm. Contributes to activation of immediate-early gene expression. The sequence is that of Protein UL29/28 (UL29) from Human cytomegalovirus (strain Merlin) (HHV-5).